The sequence spans 332 residues: 2-hydroxyacid dehydrogenase homolog 2 (332 aa).

Residues 154–155 (KI), 233–235 (TSR), and Asp259 contribute to the NAD(+) site. The active site involves Arg235. Glu264 is an active-site residue. His296 functions as the Proton donor in the catalytic mechanism. NAD(+) is bound at residue 296 to 299 (HQAF).

The protein belongs to the D-isomer specific 2-hydroxyacid dehydrogenase family.

It localises to the cytoplasm. The protein resides in the nucleus. The protein is 2-hydroxyacid dehydrogenase homolog 2 of Schizosaccharomyces pombe (strain 972 / ATCC 24843) (Fission yeast).